Here is a 475-residue protein sequence, read N- to C-terminus: UDP-N-acetylmuramate--L-alanine ligase (475 aa).

125–131 contributes to the ATP binding site; sequence GTHGKTT.

It belongs to the MurCDEF family.

The protein resides in the cytoplasm. It catalyses the reaction UDP-N-acetyl-alpha-D-muramate + L-alanine + ATP = UDP-N-acetyl-alpha-D-muramoyl-L-alanine + ADP + phosphate + H(+). It functions in the pathway cell wall biogenesis; peptidoglycan biosynthesis. Cell wall formation. The polypeptide is UDP-N-acetylmuramate--L-alanine ligase (Haemophilus influenzae (strain 86-028NP)).